The primary structure comprises 321 residues: Probable proline iminopeptidase (321 aa).

The 262-residue stretch at 35 to 296 (KPVVFLHGGP…IVVPDAGHSM (262 aa)) folds into the AB hydrolase-1 domain. Serine 110 (nucleophile) is an active-site residue. Aspartate 266 is a catalytic residue. Histidine 294 acts as the Proton donor in catalysis.

Belongs to the peptidase S33 family.

The protein resides in the cytoplasm. It catalyses the reaction Release of N-terminal proline from a peptide.. Its function is as follows. Specifically catalyzes the removal of N-terminal proline residues from peptides. The protein is Probable proline iminopeptidase (pip) of Leptolyngbya boryana (Plectonema boryanum).